Here is a 181-residue protein sequence, read N- to C-terminus: Oligoribonuclease (181 aa).

The 164-residue stretch at 8–171 (LIWLDLEMTG…DDIKDSIMEL (164 aa)) folds into the Exonuclease domain. The active site involves tyrosine 129.

It belongs to the oligoribonuclease family.

The protein resides in the cytoplasm. 3'-to-5' exoribonuclease specific for small oligoribonucleotides. The protein is Oligoribonuclease of Pseudoalteromonas translucida (strain TAC 125).